We begin with the raw amino-acid sequence, 397 residues long: Mannonate dehydratase 2 (397 aa).

It belongs to the mannonate dehydratase family. It depends on Fe(2+) as a cofactor. Mn(2+) serves as cofactor.

It catalyses the reaction D-mannonate = 2-dehydro-3-deoxy-D-gluconate + H2O. The protein operates within carbohydrate metabolism; pentose and glucuronate interconversion. In terms of biological role, catalyzes the dehydration of D-mannonate. The polypeptide is Mannonate dehydratase 2 (uxuA2) (Agrobacterium fabrum (strain C58 / ATCC 33970) (Agrobacterium tumefaciens (strain C58))).